Here is a 467-residue protein sequence, read N- to C-terminus: Signal transduction histidine-protein kinase BaeS (467 aa).

The Cytoplasmic segment spans residues 1 to 11 (MKFWRPGITGK). A helical membrane pass occupies residues 12-32 (LFLAIFATCIVLLISMHWAVR). At 33 to 167 (ISFERGFIDY…NFDKQQRQTS (135 aa)) the chain is on the periplasmic side. Residues 168 to 186 (WLIVALATLLAALATFLLA) form a helical membrane-spanning segment. In terms of domain architecture, HAMP spans 187–239 (RGLLAPVKRLVDGTHKLAAGDFTTRVTPTSEDELGKLAQDFNQLASTLEKNQQ). At 187–467 (RGLLAPVKRL…PLERDLQREV (281 aa)) the chain is on the cytoplasmic side. Residues 247 to 461 (DISHELRTPL…SITVELPLER (215 aa)) form the Histidine kinase domain. At His-250 the chain carries Phosphohistidine; by autocatalysis.

Post-translationally, autophosphorylated.

Its subcellular location is the cell inner membrane. It carries out the reaction ATP + protein L-histidine = ADP + protein N-phospho-L-histidine.. Member of the two-component regulatory system BaeS/BaeR which responds to envelope stress. Activates expression of periplasmic chaperone spy in response to spheroplast formation, indole and P pili protein PapG overexpression. Activates BaeR by phosphorylation which then activates the mdtABCD and probably the CRISPR-Cas casABCDE-ygbT-ygbF operons. The polypeptide is Signal transduction histidine-protein kinase BaeS (Escherichia coli (strain K12)).